A 459-amino-acid polypeptide reads, in one-letter code: Argininosuccinate lyase (459 aa).

It belongs to the lyase 1 family. Argininosuccinate lyase subfamily.

The protein resides in the cytoplasm. The enzyme catalyses 2-(N(omega)-L-arginino)succinate = fumarate + L-arginine. It functions in the pathway amino-acid biosynthesis; L-arginine biosynthesis; L-arginine from L-ornithine and carbamoyl phosphate: step 3/3. The chain is Argininosuccinate lyase from Staphylococcus aureus (strain MSSA476).